The following is a 149-amino-acid chain: MKVVLIQDVPKLGKKGEVINASDGYARNFLIPRGLAREATPEVLKQLEKEKEEEKKRLEALKRESENLLSELHKHVFKIKAKAGDGGKLFGSLTSANISDVISKTLSKEFDKKWIVLDNPIKALGTYDVTVKLPGGVSGKIKVEVLREE.

This sequence belongs to the bacterial ribosomal protein bL9 family.

Its function is as follows. Binds to the 23S rRNA. In Fervidobacterium nodosum (strain ATCC 35602 / DSM 5306 / Rt17-B1), this protein is Large ribosomal subunit protein bL9.